We begin with the raw amino-acid sequence, 178 residues long: Glucagon-1 (178 aa).

The first 21 residues, 1-21, serve as a signal peptide directing secretion; it reads MFGIHSLAGVLLLVIVQRQLA. Propeptides lie at residues 83–87, 123–134, and 171–178; these read SGAPS, ESAEESRNGPMS, and SNKRQEDH.

The protein belongs to the glucagon family.

The protein resides in the secreted. In terms of biological role, promotes hydrolysis of glycogen and lipids, and raises the blood sugar level. This chain is Glucagon-1 (gcg1), found in Oncorhynchus mykiss (Rainbow trout).